We begin with the raw amino-acid sequence, 488 residues long: Glutamyl-tRNA(Gln) amidotransferase subunit A (488 aa).

Catalysis depends on charge relay system residues lysine 77 and serine 152. The Acyl-ester intermediate role is filled by serine 176.

Belongs to the amidase family. GatA subfamily. Heterotrimer of A, B and C subunits.

The enzyme catalyses L-glutamyl-tRNA(Gln) + L-glutamine + ATP + H2O = L-glutaminyl-tRNA(Gln) + L-glutamate + ADP + phosphate + H(+). In terms of biological role, allows the formation of correctly charged Gln-tRNA(Gln) through the transamidation of misacylated Glu-tRNA(Gln) in organisms which lack glutaminyl-tRNA synthetase. The reaction takes place in the presence of glutamine and ATP through an activated gamma-phospho-Glu-tRNA(Gln). This is Glutamyl-tRNA(Gln) amidotransferase subunit A from Streptococcus mutans serotype c (strain ATCC 700610 / UA159).